Reading from the N-terminus, the 272-residue chain is Deaminated glutathione amidase (272 aa).

Residues 1-253 (MKPYLAAALQ…PGLAIAEINP (253 aa)) enclose the CN hydrolase domain. The active-site Proton acceptor is E43. K115 functions as the Proton donor in the catalytic mechanism. The active-site Nucleophile is the C158.

This sequence belongs to the carbon-nitrogen hydrolase superfamily. NIT1/NIT2 family.

The catalysed reaction is N-(4-oxoglutaryl)-L-cysteinylglycine + H2O = L-cysteinylglycine + 2-oxoglutarate. Functionally, hydrolyzes deaminated glutathione (dGSH, 2-oxoglutaramate) to alpha-ketoglutarate (alpha-KG) and cysteinylglycine (specific activity 7.77 umol/min/mg), hydrolyzes alpha-ketoglutaramate (a-KGM, specific activity 2.13 umol/min/mg), has no activity on glutathione or L-glutamine. May function as a metabolite repair enzyme. The chain is Deaminated glutathione amidase from Synechocystis sp. (strain PCC 6803 / GT-S).